Here is a 158-residue protein sequence, read N- to C-terminus: Dysbindin domain-containing protein 1 (158 aa).

The tract at residues 1–38 is disordered; sequence MEPSEGASPGGLVKEVDMPQAALSAPVPVTGTSGQSPM. S95 and S119 each carry phosphoserine. A disordered region spans residues 96-158; the sequence is DDENVASDSH…ILTVERPKED (63 aa). Over residues 125–141 the composition is skewed to basic and acidic residues; it reads TRAEQNREKQPFGDPER.

This sequence belongs to the dysbindin family.

This chain is Dysbindin domain-containing protein 1 (DBNDD1), found in Bos taurus (Bovine).